A 153-amino-acid chain; its full sequence is uncharacterized protein (153 aa).

The first 25 residues, 1–25, serve as a signal peptide directing secretion; that stretch reads MKKRQYLKSLYVALLGTLCYLSVNA.

This is an uncharacterized protein from Pasteurella multocida (strain Pm70).